The chain runs to 380 residues: uncharacterized protein (380 aa).

This sequence belongs to the metallo-dependent hydrolases superfamily.

This is an uncharacterized protein from Methanocaldococcus jannaschii (strain ATCC 43067 / DSM 2661 / JAL-1 / JCM 10045 / NBRC 100440) (Methanococcus jannaschii).